The primary structure comprises 535 residues: Bifunctional purine biosynthesis protein PurH (535 aa).

An MGS-like domain is found at 6–151 (TRLPIRRALI…KNHKDVAIVV (146 aa)).

The protein belongs to the PurH family.

It catalyses the reaction (6R)-10-formyltetrahydrofolate + 5-amino-1-(5-phospho-beta-D-ribosyl)imidazole-4-carboxamide = 5-formamido-1-(5-phospho-D-ribosyl)imidazole-4-carboxamide + (6S)-5,6,7,8-tetrahydrofolate. The enzyme catalyses IMP + H2O = 5-formamido-1-(5-phospho-D-ribosyl)imidazole-4-carboxamide. It participates in purine metabolism; IMP biosynthesis via de novo pathway; 5-formamido-1-(5-phospho-D-ribosyl)imidazole-4-carboxamide from 5-amino-1-(5-phospho-D-ribosyl)imidazole-4-carboxamide (10-formyl THF route): step 1/1. It functions in the pathway purine metabolism; IMP biosynthesis via de novo pathway; IMP from 5-formamido-1-(5-phospho-D-ribosyl)imidazole-4-carboxamide: step 1/1. The protein is Bifunctional purine biosynthesis protein PurH of Pseudomonas fluorescens (strain ATCC BAA-477 / NRRL B-23932 / Pf-5).